The primary structure comprises 202 residues: Small ribosomal subunit protein uS2 (202 aa).

This sequence belongs to the universal ribosomal protein uS2 family. In terms of assembly, part of the 30S ribosomal subunit.

The polypeptide is Small ribosomal subunit protein uS2 (Pyrococcus furiosus (strain ATCC 43587 / DSM 3638 / JCM 8422 / Vc1)).